The chain runs to 456 residues: 3-isopropylmalate dehydratase large subunit (456 aa).

Positions 336, 396, and 399 each coordinate [4Fe-4S] cluster.

Belongs to the aconitase/IPM isomerase family. LeuC type 1 subfamily. Heterodimer of LeuC and LeuD. The cofactor is [4Fe-4S] cluster.

It carries out the reaction (2R,3S)-3-isopropylmalate = (2S)-2-isopropylmalate. It participates in amino-acid biosynthesis; L-leucine biosynthesis; L-leucine from 3-methyl-2-oxobutanoate: step 2/4. Functionally, catalyzes the isomerization between 2-isopropylmalate and 3-isopropylmalate, via the formation of 2-isopropylmaleate. The sequence is that of 3-isopropylmalate dehydratase large subunit from Staphylococcus epidermidis (strain ATCC 12228 / FDA PCI 1200).